Consider the following 153-residue polypeptide: MSGWDQYVQYLTANQQVEYGLILGKTDGTIWASNVGLTTLYNNYQIDVEGQKANVNETANLLAAMNNNGVPTDPLCGIRIMNQKYYTVKYDADSQVWYLKKDHGGACIAITNQALVIGTFDITKKQQNGVAQNPGQVNKVVESLAATLKQAGY.

The protein belongs to the profilin family. In terms of assembly, occurs in many kinds of cells as a complex with monomeric actin in a 1:1 ratio.

The protein localises to the cytoplasm. It is found in the cytoskeleton. Binds to actin and affects the structure of the cytoskeleton. At high concentrations, profilin prevents the polymerization of actin, whereas it enhances it at low concentrations. By binding to PIP2, it inhibits the formation of IP3 and DG. In Tetrahymena pyriformis, this protein is Profilin.